We begin with the raw amino-acid sequence, 387 residues long: GTPase Obg (387 aa).

In terms of domain architecture, Obg spans 1–159 (MKFVDEAIIR…RSLKLELLLL (159 aa)). The 174-residue stretch at 160-333 (ADVGLLGMPN…LALKLLDFID (174 aa)) folds into the OBG-type G domain. Residues 166–173 (GMPNAGKS), 191–195 (FTTLV), 213–216 (DIPG), 283–286 (NKAD), and 314–316 (SAY) each bind GTP. Mg(2+) is bound by residues Ser173 and Thr193.

This sequence belongs to the TRAFAC class OBG-HflX-like GTPase superfamily. OBG GTPase family. As to quaternary structure, monomer. The cofactor is Mg(2+).

It localises to the cytoplasm. An essential GTPase which binds GTP, GDP and possibly (p)ppGpp with moderate affinity, with high nucleotide exchange rates and a fairly low GTP hydrolysis rate. Plays a role in control of the cell cycle, stress response, ribosome biogenesis and in those bacteria that undergo differentiation, in morphogenesis control. The protein is GTPase Obg of Shewanella pealeana (strain ATCC 700345 / ANG-SQ1).